Consider the following 464-residue polypeptide: MMLLYYALSFILLPVYFIIILIRLLIGKEDIRRIQERFAIGKHRQDDSLDFMQTSANKEEFKGDTSLRTTTYTLIREDEGLGSTYKLPLEASDARRLIWINAASIGESMVALTLIHNISKRYPDVRFLVTSWTNSSAKILTAKLPKIAVHQFLPIDNIIFTRKFLRNWQPDLGIFIESELWPCTINEGAKQCKLLLVNARISDKSFKAWLQRKSFFQLILKNCSKIIVQSERDLQKFNELGVSDAVNLGNIKFANEKLPVNQEELSKLSLHLDNKRVVLFASTHPEDEEVILPIIKNLKEQFLDCYIILIPRHPERVKSIIDNCKSHNLSATAKSQNDLPVLSDDLYIVDRFGEMGLFFSVATISFIGGSFKQGGHNILEAAYFSNCIIFGPDMSKNTDIAKGVLQNEAAIQIKNGEDLLTKLTYLLRSNNALELTTYRENALKFIKDNQKVLDEYLNVITKFL.

The helical; Signal-anchor transmembrane segment at 2–22 threads the bilayer; sequence MLLYYALSFILLPVYFIIILI. An RPE1 insert domain is found at 47–93; sequence DSLDFMQTSANKEEFKGDTSLRTTTYTLIREDEGLGSTYKLPLEASD. Glutamate 107 serves as the catalytic Proton acceptor. CMP is bound by residues 311–312, 352–354, and 377–380; these read PR, FGE, and NILE.

This sequence belongs to the glycosyltransferase group 1 family. Glycosyltransferase 30 subfamily.

It localises to the cell inner membrane. It catalyses the reaction lipid IVA (E. coli) + CMP-3-deoxy-beta-D-manno-octulosonate = alpha-Kdo-(2-&gt;6)-lipid IVA (E. coli) + CMP + H(+). It functions in the pathway bacterial outer membrane biogenesis; LPS core biosynthesis. Its function is as follows. Involved in lipopolysaccharide (LPS) biosynthesis. Catalyzes the transfer of 3-deoxy-D-manno-octulosonate (Kdo) residue(s) from CMP-Kdo to lipid IV(A), the tetraacyldisaccharide-1,4'-bisphosphate precursor of lipid A. This chain is 3-deoxy-D-manno-octulosonic acid transferase (waaA), found in Rickettsia conorii (strain ATCC VR-613 / Malish 7).